A 328-amino-acid polypeptide reads, in one-letter code: Tetraacyldisaccharide 4'-kinase (328 aa).

Position 55–62 (55–62) interacts with ATP; that stretch reads TAGGNGKT.

The protein belongs to the LpxK family.

The enzyme catalyses a lipid A disaccharide + ATP = a lipid IVA + ADP + H(+). It functions in the pathway glycolipid biosynthesis; lipid IV(A) biosynthesis; lipid IV(A) from (3R)-3-hydroxytetradecanoyl-[acyl-carrier-protein] and UDP-N-acetyl-alpha-D-glucosamine: step 6/6. Its function is as follows. Transfers the gamma-phosphate of ATP to the 4'-position of a tetraacyldisaccharide 1-phosphate intermediate (termed DS-1-P) to form tetraacyldisaccharide 1,4'-bis-phosphate (lipid IVA). The sequence is that of Tetraacyldisaccharide 4'-kinase from Escherichia coli O139:H28 (strain E24377A / ETEC).